A 370-amino-acid polypeptide reads, in one-letter code: Phospho-2-dehydro-3-deoxyheptonate aldolase, phenylalanine-inhibited (370 aa).

The protein belongs to the class-I DAHP synthase family.

The catalysed reaction is D-erythrose 4-phosphate + phosphoenolpyruvate + H2O = 7-phospho-2-dehydro-3-deoxy-D-arabino-heptonate + phosphate. Its pathway is metabolic intermediate biosynthesis; chorismate biosynthesis; chorismate from D-erythrose 4-phosphate and phosphoenolpyruvate: step 1/7. With respect to regulation, inhibited by phenyalanine. Functionally, stereospecific condensation of phosphoenolpyruvate (PEP) and D-erythrose-4-phosphate (E4P) giving rise to 3-deoxy-D-arabino-heptulosonate-7-phosphate (DAHP). This chain is Phospho-2-dehydro-3-deoxyheptonate aldolase, phenylalanine-inhibited (ARO3), found in Saccharomyces cerevisiae (strain ATCC 204508 / S288c) (Baker's yeast).